Here is a 1004-residue protein sequence, read N- to C-terminus: Ephrin type-A receptor 8 (1004 aa).

Positions 1–26 are cleaved as a signal peptide; the sequence is MAPARARLSPALWVVTAAAAATCVSA. The Extracellular segment spans residues 27 to 541; the sequence is GRGEVNLLDT…KPRPRYDTRT (515 aa). Residues 30–208 enclose the Eph LBD domain; sequence EVNLLDTSTI…YYKKCPAMVR (179 aa). Fibronectin type-III domains follow at residues 327–437 and 438–533; these read PPSA…TNQA and APSQ…TGKP. 3 N-linked (GlcNAc...) asparagine glycosylation sites follow: N339, N406, and N431. Residues 542–562 form a helical membrane-spanning segment; it reads IVWICLTLITGLVVLLLLLIC. Positions 563-569 are mediates interaction with ANKS1A and ANKS1B; it reads KKRHCGY. The Cytoplasmic segment spans residues 563 to 1004; sequence KKRHCGYSKA…SSTQGPRRHL (442 aa). The tract at residues 588-643 is mediates interaction with PIK3CG and required for endocytosis; it reads APPPVFLPLNHPPGKFPETQFSAEPHTYEEPGRAGRSFTREIEASRIHIEKIIGSG. Residue Y615 is modified to Phosphotyrosine; by autocatalysis. A Protein kinase domain is found at 634–895; that stretch reads IHIEKIIGSG…HVVSVLDALV (262 aa). ATP contacts are provided by residues 640-648 and K666; that span reads IGSGESGEV. D759 (proton acceptor) is an active-site residue. At Y838 the chain carries Phosphotyrosine; by autocatalysis. The SAM domain maps to 929 to 993; the sequence is NGDLTVGDWL…LGSIQTMRAQ (65 aa). Positions 1002-1004 match the PDZ-binding motif; it reads RHL.

It belongs to the protein kinase superfamily. Tyr protein kinase family. Ephrin receptor subfamily. As to quaternary structure, heterotetramer upon binding of the ligand. The heterotetramer is composed of an ephrin dimer and a receptor dimer. Oligomerization is probably required to induce biological responses. May also form heterodimers with other ephrin receptors. Interacts with FYN; possible downstream effector of EPHA8 in regulation of cell adhesion. Interacts with PIK3CG; regulates integrin-mediated cell adhesion to substrate. Interacts with TIAM1; regulates clathrin-mediated endocytosis of EPHA8. Interacts with ANKS1A and ANKS1B; EPHA8 kinase activity-independent but stimulated by EPHA8 ubiquitination. In terms of processing, phosphorylated. Phosphorylation is stimulated upon binding of its ligands including EFNA2, EFNA3 and EFNA5. Autophosphorylation on Tyr-615 is critical for association with FYN. Autophosphorylation on Tyr-838 modulates tyrosine kinase activity. Post-translationally, ubiquitinated. Ubiquitination by CBL regulates the receptor stability and activity through proteasomal degradation. ANKS1A prevents ubiquitination and degradation. Specifically expressed in the central nervous system.

The protein resides in the cell membrane. It localises to the cell projection. It is found in the early endosome membrane. The catalysed reaction is L-tyrosyl-[protein] + ATP = O-phospho-L-tyrosyl-[protein] + ADP + H(+). Its function is as follows. Receptor tyrosine kinase which binds promiscuously GPI-anchored ephrin-A family ligands residing on adjacent cells, leading to contact-dependent bidirectional signaling into neighboring cells. The signaling pathway downstream of the receptor is referred to as forward signaling while the signaling pathway downstream of the ephrin ligand is referred to as reverse signaling. The GPI-anchored ephrin-A EFNA2, EFNA3, and EFNA5 are able to activate EPHA8 through phosphorylation. With EFNA5 may regulate integrin-mediated cell adhesion and migration on fibronectin substrate but also neurite outgrowth. During development of the nervous system also plays a role in axon guidance. Downstream effectors of the EPHA8 signaling pathway include FYN which promotes cell adhesion upon activation by EPHA8 and the MAP kinases in the stimulation of neurite outgrowth. This Mus musculus (Mouse) protein is Ephrin type-A receptor 8 (Epha8).